A 182-amino-acid chain; its full sequence is Heat shock protein beta-2 (182 aa).

The 109-residue stretch at 55–163 (RAGEGGRAGA…DTEVNEVYIS (109 aa)) folds into the sHSP domain.

This sequence belongs to the small heat shock protein (HSP20) family. In terms of assembly, interacts with DMPK; may enhance its kinase activity.

The protein localises to the cytoplasm. It is found in the nucleus. Functionally, may regulate the kinase DMPK. This chain is Heat shock protein beta-2 (Hspb2), found in Rattus norvegicus (Rat).